The sequence spans 332 residues: Phosphoribosylformylglycinamidine cyclo-ligase (332 aa).

The protein belongs to the AIR synthase family.

The protein resides in the cytoplasm. The enzyme catalyses 2-formamido-N(1)-(5-O-phospho-beta-D-ribosyl)acetamidine + ATP = 5-amino-1-(5-phospho-beta-D-ribosyl)imidazole + ADP + phosphate + H(+). It participates in purine metabolism; IMP biosynthesis via de novo pathway; 5-amino-1-(5-phospho-D-ribosyl)imidazole from N(2)-formyl-N(1)-(5-phospho-D-ribosyl)glycinamide: step 2/2. The sequence is that of Phosphoribosylformylglycinamidine cyclo-ligase from Clostridium acetobutylicum (strain ATCC 824 / DSM 792 / JCM 1419 / IAM 19013 / LMG 5710 / NBRC 13948 / NRRL B-527 / VKM B-1787 / 2291 / W).